Reading from the N-terminus, the 332-residue chain is Tetraacyldisaccharide 4'-kinase (332 aa).

53-60 (SVGGNGKT) contributes to the ATP binding site.

It belongs to the LpxK family.

The enzyme catalyses a lipid A disaccharide + ATP = a lipid IVA + ADP + H(+). Its pathway is glycolipid biosynthesis; lipid IV(A) biosynthesis; lipid IV(A) from (3R)-3-hydroxytetradecanoyl-[acyl-carrier-protein] and UDP-N-acetyl-alpha-D-glucosamine: step 6/6. In terms of biological role, transfers the gamma-phosphate of ATP to the 4'-position of a tetraacyldisaccharide 1-phosphate intermediate (termed DS-1-P) to form tetraacyldisaccharide 1,4'-bis-phosphate (lipid IVA). The protein is Tetraacyldisaccharide 4'-kinase of Haemophilus influenzae (strain 86-028NP).